We begin with the raw amino-acid sequence, 70 residues long: Large ribosomal subunit protein bL31 (70 aa).

Residues cysteine 16, cysteine 18, cysteine 37, and cysteine 40 each contribute to the Zn(2+) site.

Belongs to the bacterial ribosomal protein bL31 family. Type A subfamily. In terms of assembly, part of the 50S ribosomal subunit. Zn(2+) serves as cofactor.

In terms of biological role, binds the 23S rRNA. This is Large ribosomal subunit protein bL31 from Salmonella agona (strain SL483).